The chain runs to 201 residues: Glutathione peroxidase 1 (201 aa).

Ser-32 bears the Phosphoserine mark. The active site involves Sec-47. Sec-47 is a non-standard amino acid (selenocysteine). N6-acetyllysine; alternate is present on residues Lys-86, Lys-112, and Lys-146. Residues Lys-86, Lys-112, and Lys-146 each carry the N6-succinyllysine; alternate modification. Phosphoserine occurs at positions 195 and 199.

This sequence belongs to the glutathione peroxidase family. As to quaternary structure, homotetramer. Interacts with MIEN1. During periods of oxidative stress, Sec-47 may react with a superoxide radical, irreversibly lose hydroselenide and be converted to dehydroalanine.

It localises to the cytoplasm. It is found in the mitochondrion. It catalyses the reaction 2 glutathione + H2O2 = glutathione disulfide + 2 H2O. It carries out the reaction a hydroperoxy polyunsaturated fatty acid + 2 glutathione = a hydroxy polyunsaturated fatty acid + glutathione disulfide + H2O. The enzyme catalyses tert-butyl hydroperoxide + 2 glutathione = tert-butanol + glutathione disulfide + H2O. The catalysed reaction is cumene hydroperoxide + 2 glutathione = 2-phenylpropan-2-ol + glutathione disulfide + H2O. It catalyses the reaction (13S)-hydroperoxy-(9Z,11E)-octadecadienoate + 2 glutathione = (13S)-hydroxy-(9Z,11E)-octadecadienoate + glutathione disulfide + H2O. It carries out the reaction (9S)-hydroperoxy-(10E,12Z)-octadecadienoate + 2 glutathione = (9S)-hydroxy-(10E,12Z)-octadecadienoate + glutathione disulfide + H2O. The enzyme catalyses (5S)-hydroperoxy-(6E,8Z,11Z,14Z)-eicosatetraenoate + 2 glutathione = (5S)-hydroxy-(6E,8Z,11Z,14Z)-eicosatetraenoate + glutathione disulfide + H2O. The catalysed reaction is (12S)-hydroperoxy-(5Z,8Z,10E,14Z)-eicosatetraenoate + 2 glutathione = (12S)-hydroxy-(5Z,8Z,10E,14Z)-eicosatetraenoate + glutathione disulfide + H2O. It catalyses the reaction (12R)-hydroperoxy-(5Z,8Z,10E,14Z)-eicosatetraenoate + 2 glutathione = (12R)-hydroxy-(5Z,8Z,10E,14Z)-eicosatetraenoate + glutathione disulfide + H2O. It carries out the reaction (15S)-hydroperoxy-(5Z,8Z,11Z,13E)-eicosatetraenoate + 2 glutathione = (15S)-hydroxy-(5Z,8Z,11Z,13E)-eicosatetraenoate + glutathione disulfide + H2O. The enzyme catalyses (5S)-hydroperoxy-(6E,8Z,11Z,14Z,17Z)-eicosapentaenoate + 2 glutathione = (5S)-hydroxy-(6E,8Z,11Z,14Z,17Z)-eicosapentaenoate + glutathione disulfide + H2O. The catalysed reaction is (12S)-hydroperoxy-(5Z,8Z,10E,14Z,17Z)-eicosapentaenoate + 2 glutathione = (12S)-hydroxy-(5Z,8Z,10E,14Z,17Z)-eicosapentaenoate + glutathione disulfide + H2O. It catalyses the reaction (15S)-hydroperoxy-(5Z,8Z,11Z,13E,17Z)-eicosapentaenoate + 2 glutathione = (15S)-hydroxy-(5Z,8Z,11Z,13E,17Z)-eicosapentaenoate + glutathione disulfide + H2O. It carries out the reaction (15S)-hydroperoxy-(11Z,13E)-eicosadienoate + 2 glutathione = (15S)-hydroxy-(11Z,13E)-eicosadienoate + glutathione disulfide + H2O. The enzyme catalyses (17S)-hydroperoxy-(4Z,7Z,10Z,13Z,15E,19Z)-docosahexaenoate + 2 glutathione = (17S)-hydroxy-(4Z,7Z,10Z,13Z,15E,19Z)-docosahexaenoate + glutathione disulfide + H2O. Catalyzes the reduction of hydroperoxides in a glutathione-dependent manner thus regulating cellular redox homeostasis. Can reduce small soluble hydroperoxides such as H2O2, cumene hydroperoxide and tert-butyl hydroperoxide, as well as several fatty acid-derived hydroperoxides. In platelets catalyzes the reduction of 12-hydroperoxyeicosatetraenoic acid, the primary product of the arachidonate 12-lipoxygenase pathway. The protein is Glutathione peroxidase 1 (GPX1) of Macaca fuscata fuscata (Japanese macaque).